The sequence spans 22 residues: Heliocin (22 aa).

The residue at position 1 (Q1) is a Pyrrolidone carboxylic acid. The segment at 1–22 is disordered; sequence QRFIHPTYRPPPQPRRPVIMRA. Residue T7 is glycosylated (O-linked (GalNAc...) threonine).

In terms of assembly, monomer. Hemolymph.

Its subcellular location is the secreted. Has antibacterial activity, preferentially against Gram-negative bacteria. This Heliothis virescens (Tobacco budworm moth) protein is Heliocin.